We begin with the raw amino-acid sequence, 546 residues long: Glutathione synthetase, chloroplastic (546 aa).

A chloroplast-targeting transit peptide spans 1–63 (MGSGCSSPSI…SPLKCAKVPE (63 aa)). Position 200 (arginine 200) interacts with substrate. Glutamate 216 provides a ligand contact to ATP. Residues glutamate 216 and asparagine 218 each coordinate Mg(2+). Substrate contacts are provided by residues 220–223 (ISSS), 288–290 (ERN), glutamine 294, and 342–345 (RAGY). ATP-binding positions include lysine 381, 435 to 444 (KPQREGGGNN), tyrosine 446, 471 to 474 (MQRI), and glutamate 497. Glutamate 439 is a Mg(2+) binding site. Arginine 522 serves as a coordination point for substrate. Residues lysine 524 and glutamate 530 each coordinate ATP. A substrate-binding site is contributed by 533 to 534 (VA).

Belongs to the eukaryotic GSH synthase family. In terms of assembly, homodimer. The cofactor is Mg(2+).

It is found in the plastid. It localises to the chloroplast. The enzyme catalyses gamma-L-glutamyl-L-cysteine + glycine + ATP = glutathione + ADP + phosphate + H(+). It participates in sulfur metabolism; glutathione biosynthesis; glutathione from L-cysteine and L-glutamate: step 2/2. This is Glutathione synthetase, chloroplastic (GSH2) from Solanum lycopersicum (Tomato).